We begin with the raw amino-acid sequence, 257 residues long: Ubiquinone biosynthesis O-methyltransferase (257 aa).

R43, G77, D98, and M144 together coordinate S-adenosyl-L-methionine.

The protein belongs to the methyltransferase superfamily. UbiG/COQ3 family.

The catalysed reaction is a 3-demethylubiquinol + S-adenosyl-L-methionine = a ubiquinol + S-adenosyl-L-homocysteine + H(+). It catalyses the reaction a 3-(all-trans-polyprenyl)benzene-1,2-diol + S-adenosyl-L-methionine = a 2-methoxy-6-(all-trans-polyprenyl)phenol + S-adenosyl-L-homocysteine + H(+). The protein operates within cofactor biosynthesis; ubiquinone biosynthesis. Its function is as follows. O-methyltransferase that catalyzes the 2 O-methylation steps in the ubiquinone biosynthetic pathway. The protein is Ubiquinone biosynthesis O-methyltransferase of Psychrobacter arcticus (strain DSM 17307 / VKM B-2377 / 273-4).